Here is a 341-residue protein sequence, read N- to C-terminus: Serpentine receptor class epsilon-8 (341 aa).

A run of 7 helical transmembrane segments spans residues 37–57, 64–86, 101–123, 143–163, 169–189, 235–255, and 264–284; these read VGFL…FIFI, LTFL…CIIV, WILV…LPIF, IWVS…SAIA, IPVV…YIGI, VQIS…MDHF, and WSYV…PIIL.

The protein belongs to the nematode receptor-like protein sre family.

The protein resides in the membrane. This is Serpentine receptor class epsilon-8 (sre-8) from Caenorhabditis elegans.